The sequence spans 384 residues: L-lactate dehydrogenase (384 aa).

Residues 1–380 (MIISSSNDYR…NESCLVEMNK (380 aa)) enclose the FMN hydroxy acid dehydrogenase domain. Y24 is a substrate binding site. FMN contacts are provided by S106 and Q127. Substrate is bound at residue Y129. Residue T155 participates in FMN binding. Substrate is bound at residue R164. K251 lines the FMN pocket. The active-site Proton acceptor is H275. R278 is a binding site for substrate. Residue 306–330 (DSGIRNGLDVVRMLALGADSVMLGR) coordinates FMN.

It belongs to the FMN-dependent alpha-hydroxy acid dehydrogenase family. It depends on FMN as a cofactor.

The protein resides in the cell inner membrane. It carries out the reaction (S)-lactate + A = pyruvate + AH2. Functionally, catalyzes the conversion of L-lactate to pyruvate. Is coupled to the respiratory chain. This Acinetobacter baylyi (strain ATCC 33305 / BD413 / ADP1) protein is L-lactate dehydrogenase.